A 123-amino-acid polypeptide reads, in one-letter code: MPDLFPSLKYHDGLIPVIVQDAKTLQVLMFAFANEEAVSLTRSTGYAHYFSRSRNKLWKKGEESGHLQKIVRICVDCDEDCLLYLVEQTGCACHEGYASCFFRTMEGEVILPRLKDPADIYSR.

Asp-76 is a Mg(2+) binding site. Zn(2+) is bound at residue Cys-77. 2 residues coordinate Mg(2+): Asp-78 and Asp-80. Zn(2+) contacts are provided by Cys-93 and Cys-100.

It belongs to the PRA-CH family. As to quaternary structure, homodimer. It depends on Mg(2+) as a cofactor. The cofactor is Zn(2+).

The protein resides in the cytoplasm. The catalysed reaction is 1-(5-phospho-beta-D-ribosyl)-5'-AMP + H2O = 1-(5-phospho-beta-D-ribosyl)-5-[(5-phospho-beta-D-ribosylamino)methylideneamino]imidazole-4-carboxamide. The protein operates within amino-acid biosynthesis; L-histidine biosynthesis; L-histidine from 5-phospho-alpha-D-ribose 1-diphosphate: step 3/9. In terms of biological role, catalyzes the hydrolysis of the adenine ring of phosphoribosyl-AMP. The protein is Phosphoribosyl-AMP cyclohydrolase of Methanocorpusculum labreanum (strain ATCC 43576 / DSM 4855 / Z).